The sequence spans 268 residues: Putative carbamate hydrolase RutD (268 aa).

Residues 15-119 (PVMVMIAGLG…VIVNGWLSLS (105 aa)) enclose the AB hydrolase-1 domain.

It belongs to the AB hydrolase superfamily. Hydrolase RutD family.

The enzyme catalyses carbamate + 2 H(+) = NH4(+) + CO2. Involved in pyrimidine catabolism. May facilitate the hydrolysis of carbamate, a reaction that can also occur spontaneously. This Cronobacter sakazakii (strain ATCC BAA-894) (Enterobacter sakazakii) protein is Putative carbamate hydrolase RutD.